Reading from the N-terminus, the 734-residue chain is Photosystem I P700 chlorophyll a apoprotein A2 (734 aa).

The next 8 helical transmembrane spans lie at 46 to 69, 135 to 158, 175 to 199, 273 to 291, 330 to 353, 369 to 395, 417 to 439, and 517 to 535; these read IFAS…FHVA, LYTG…LHLQ, LNHH…HVAI, IAHH…GHMY, IHFQ…QHMY, AALY…IFFI, AIIS…LYVH, and FLVH…LILV. 2 residues coordinate [4Fe-4S] cluster: cysteine 559 and cysteine 568. 2 helical membrane-spanning segments follow: residues 575–596 and 643–665; these read AFYL…YWHW and LSVW…MFLI. The chlorophyll a site is built by histidine 654, methionine 662, and tyrosine 670. Residue tryptophan 671 coordinates phylloquinone. A helical transmembrane segment spans residues 707 to 727; it reads LVGLAHFSVGYIFTYAAFLIA.

Belongs to the PsaA/PsaB family. In terms of assembly, the PsaA/B heterodimer binds the P700 chlorophyll special pair and subsequent electron acceptors. PSI consists of a core antenna complex that captures photons, and an electron transfer chain that converts photonic excitation into a charge separation. The eukaryotic PSI reaction center is composed of at least 11 subunits. The cofactor is P700 is a chlorophyll a/chlorophyll a' dimer, A0 is one or more chlorophyll a, A1 is one or both phylloquinones and FX is a shared 4Fe-4S iron-sulfur center..

Its subcellular location is the plastid. It is found in the chloroplast thylakoid membrane. It carries out the reaction reduced [plastocyanin] + hnu + oxidized [2Fe-2S]-[ferredoxin] = oxidized [plastocyanin] + reduced [2Fe-2S]-[ferredoxin]. PsaA and PsaB bind P700, the primary electron donor of photosystem I (PSI), as well as the electron acceptors A0, A1 and FX. PSI is a plastocyanin-ferredoxin oxidoreductase, converting photonic excitation into a charge separation, which transfers an electron from the donor P700 chlorophyll pair to the spectroscopically characterized acceptors A0, A1, FX, FA and FB in turn. Oxidized P700 is reduced on the lumenal side of the thylakoid membrane by plastocyanin. This chain is Photosystem I P700 chlorophyll a apoprotein A2, found in Oryza sativa (Rice).